The chain runs to 353 residues: Photosystem II D2 protein (353 aa).

N-acetylthreonine is present on threonine 2. Threonine 2 is subject to Phosphothreonine. The chain crosses the membrane as a helical span at residues 41–61; sequence CAYFALGGWFTGTTFVTSWYT. Histidine 118 provides a ligand contact to chlorophyll a. The helical transmembrane segment at 125–141 threads the bilayer; sequence GFMLRQFELARSVQLRP. Pheophytin a-binding residues include glutamine 130 and asparagine 143. Residues 153-166 form a helical membrane-spanning segment; sequence VFVSVFLIYPLGQS. Histidine 198 contacts chlorophyll a. Residues 208–228 form a helical membrane-spanning segment; that stretch reads AALLCAIHGATVENTLFEDGD. Histidine 215 and phenylalanine 262 together coordinate a plastoquinone. Residue histidine 215 participates in Fe cation binding. A Fe cation-binding site is contributed by histidine 269. Residues 279–295 traverse the membrane as a helical segment; sequence GLWMSAIGVVGLALNLR.

The protein belongs to the reaction center PufL/M/PsbA/D family. In terms of assembly, PSII is composed of 1 copy each of membrane proteins PsbA, PsbB, PsbC, PsbD, PsbE, PsbF, PsbH, PsbI, PsbJ, PsbK, PsbL, PsbM, PsbT, PsbX, PsbY, PsbZ, Psb30/Ycf12, at least 3 peripheral proteins of the oxygen-evolving complex and a large number of cofactors. It forms dimeric complexes. The cofactor is The D1/D2 heterodimer binds P680, chlorophylls that are the primary electron donor of PSII, and subsequent electron acceptors. It shares a non-heme iron and each subunit binds pheophytin, quinone, additional chlorophylls, carotenoids and lipids. There is also a Cl(-1) ion associated with D1 and D2, which is required for oxygen evolution. The PSII complex binds additional chlorophylls, carotenoids and specific lipids..

It is found in the plastid. The protein resides in the chloroplast thylakoid membrane. It catalyses the reaction 2 a plastoquinone + 4 hnu + 2 H2O = 2 a plastoquinol + O2. Functionally, photosystem II (PSII) is a light-driven water:plastoquinone oxidoreductase that uses light energy to abstract electrons from H(2)O, generating O(2) and a proton gradient subsequently used for ATP formation. It consists of a core antenna complex that captures photons, and an electron transfer chain that converts photonic excitation into a charge separation. The D1/D2 (PsbA/PsbD) reaction center heterodimer binds P680, the primary electron donor of PSII as well as several subsequent electron acceptors. D2 is needed for assembly of a stable PSII complex. This chain is Photosystem II D2 protein, found in Agrostis stolonifera (Creeping bentgrass).